Here is a 316-residue protein sequence, read N- to C-terminus: Nautilin-63 (316 aa).

Disordered stretches follow at residues 1–26 (IPDL…GPRG), 149–173 (PFPT…VTPF), 189–238 (DSRC…GIAS), and 259–278 (PPTS…GLNK). The span at 10–26 (TLPVLTKGPTGLLGPRG) shows a compositional bias: low complexity. Composition is skewed to polar residues over residues 152 to 163 (TSRSTYGPSGSQ), 207 to 216 (GHSSPATLNS), and 269 to 278 (SGYTSDGLNK).

In terms of processing, glycosylated; contains mainly glucose, galactose, galactosamine, glucosamine and glucuronic acid. In terms of tissue distribution, component of the acid-soluble organic matrix of nacreous shell layers (at protein level).

Its subcellular location is the secreted. Its function is as follows. Involved in nacre formation. Affects morphology of calcite crystals in vitro but does not inhibit their formation. Binds chitin. In Nautilus macromphalus (Bellybutton nautilus), this protein is Nautilin-63.